The sequence spans 282 residues: tRNA pseudouridine synthase B (282 aa).

The Nucleophile role is filled by D39.

This sequence belongs to the pseudouridine synthase TruB family. Type 1 subfamily.

It catalyses the reaction uridine(55) in tRNA = pseudouridine(55) in tRNA. Responsible for synthesis of pseudouridine from uracil-55 in the psi GC loop of transfer RNAs. The protein is tRNA pseudouridine synthase B of Borrelia garinii subsp. bavariensis (strain ATCC BAA-2496 / DSM 23469 / PBi) (Borreliella bavariensis).